The primary structure comprises 778 residues: Double zinc ribbon and ankyrin repeat-containing protein 1 (778 aa).

Phosphoserine occurs at positions 179 and 201. DZANK-type zinc fingers lie at residues 230–289 (CAHC…CVVC) and 359–407 (CSRC…GSCG). 2 ANK repeats span residues 631–662 (ENKL…DPNC) and 666–695 (QGRP…DIDQ). Ser768 carries the post-translational modification Phosphoserine.

In terms of assembly, interacts with NINL. Associates with DYNC1H1 and multiple dynein intermediate and light chains as well as actin-binding proteins.

It is found in the cytoplasm. It localises to the cytoskeleton. The protein resides in the microtubule organizing center. Its subcellular location is the centrosome. The protein localises to the cilium basal body. Functionally, involved in vesicle transport in photoreceptor cells. The protein is Double zinc ribbon and ankyrin repeat-containing protein 1 (Dzank1) of Mus musculus (Mouse).